We begin with the raw amino-acid sequence, 201 residues long: Transgelin (201 aa).

Position 2 is an N-acetylalanine (Ala2). Positions 24 to 137 (EELEERLVEW…RTLMALGSLA (114 aa)) constitute a Calponin-homology (CH) domain. Ser166 carries the phosphoserine modification. Lys172 carries the post-translational modification N6-acetyllysine. A Calponin-like repeat occupies 175–200 (IGLQMGSNRGASQAGMTGYGRPRQII). Position 181 is a phosphoserine (Ser181). At Arg183 the chain carries Omega-N-methylarginine.

It belongs to the calponin family.

It localises to the cytoplasm. Its function is as follows. Actin cross-linking/gelling protein. The sequence is that of Transgelin (Tagln) from Mus musculus (Mouse).